A 344-amino-acid chain; its full sequence is MMVIRPVERSDVSALMQLASKTGGGLTSLPANEATLSARIERAIKTWQGELPKSEQGYVFVLEDSETGTVAGICAIEVAVGLNDPWYNYRVGTLVHASKELNVYNALPTLFLSNDHTGSSELCTLFLDPDWRKEGNGYLLSKSRFMFMAAFRDKFNDKVVAEMRGVIDEHGYSPFWQSLGKRFFSMDFSRADFLCGTGQKAFIAELMPKHPIYTHFLSQEAQDVIGQVHPQTAPARAVLEKEGFRYRNYIDIFDGGPTLECDIDRVRAIRKSRLVEVAEGQPAQGDFPACLVANENYHHFRVVLVRTDPATERLILTAAQLDALKCHAGDRVRLVRLCAEEKTA.

Residue leucine 125 coordinates succinyl-CoA. Catalysis depends on histidine 229, which acts as the Proton donor.

The protein belongs to the arginine N-succinyltransferase family.

The catalysed reaction is succinyl-CoA + L-arginine = N(2)-succinyl-L-arginine + CoA + H(+). It functions in the pathway amino-acid degradation; L-arginine degradation via AST pathway; L-glutamate and succinate from L-arginine: step 1/5. Functionally, catalyzes the transfer of succinyl-CoA to arginine to produce N(2)-succinylarginine. The sequence is that of Arginine N-succinyltransferase from Escherichia coli O157:H7.